Consider the following 200-residue polypeptide: Phospholipase A2 inhibitor 1 (200 aa).

The signal sequence occupies residues 1–19 (MKSLHIICLLFIFVARGNS). Disulfide bonds link C22–C46, C25–C32, C39–C67, C73–C94, C95–C100, C118–C143, C136–C165, and C169–C191. N-linked (GlcNAc...) asparagine glycosylation occurs at N176.

It belongs to the CNF-like-inhibitor family. As to quaternary structure, occurs as a mixture of oligomers. Tetrameric arrangement appears to be the predominant quaternary structure. In terms of processing, N-glycosylated. As to expression, expressed by the liver.

It is found in the secreted. In terms of biological role, inhibits basic phospholipase A2 isozymes PLA-B, BP-I and BP-II. In Protobothrops flavoviridis (Habu), this protein is Phospholipase A2 inhibitor 1.